Reading from the N-terminus, the 311-residue chain is MYTQGNPKLWTGRLDSETDPKQFRHFQTVKFANLENMENVSDKTGVGLLGYAVDKGVENNKGRIGSRKGPDIIKHEFAKLPDLSECEMLIDYGNVEHTSNHLRETQQEMARLSAKVIKQHKQAFLIGGGHDIAYAQYLATREVYSDASIGIINIDAHFDTRPDEPPTSGTMFREILDNDENVDYLVLGLAQGGNTRALYDYAKDNNIIYVYADELLHQVSPTIKDKIERFIHDHDTIMFTICMDVIDSAFAPGVSSPSVLGLYPHSVFEISKRVILSDKVSSISIAETNPDYDVDNRTSKLAANLIHHFLV.

Mn(2+) is bound by residues His130, Asp155, His157, Asp159, Cys242, and Asp244.

The protein belongs to the arginase family. Mn(2+) serves as cofactor.

The catalysed reaction is N-formimidoyl-L-glutamate + H2O = formamide + L-glutamate. Its pathway is amino-acid degradation; L-histidine degradation into L-glutamate; L-glutamate from N-formimidoyl-L-glutamate (hydrolase route): step 1/1. Catalyzes the conversion of N-formimidoyl-L-glutamate to L-glutamate and formamide. The protein is Formimidoylglutamase of Staphylococcus haemolyticus (strain JCSC1435).